Reading from the N-terminus, the 147-residue chain is Putative protein adenylyltransferase MJ1305 (147 aa).

The GSX(10)DXD motif motif lies at 32–46 (GSYARGTAVEYSDVD). Asp44 and Asp46 together coordinate Mg(2+).

The protein belongs to the MntA antitoxin family. It depends on Mg(2+) as a cofactor.

It carries out the reaction L-tyrosyl-[protein] + ATP = O-(5'-adenylyl)-L-tyrosyl-[protein] + diphosphate. The enzyme catalyses O-(5'-adenylyl)-L-tyrosyl-[protein] + ATP = O-[5'-(adenylyl-(5'-&gt;3')-adenylyl)]-L-tyrosyl-[protein] + diphosphate. Functionally, putative antitoxin component of a putative type VII toxin-antitoxin (TA) system. Its cognate toxin might be MJ1304, which it might AMPylate. In Methanocaldococcus jannaschii (strain ATCC 43067 / DSM 2661 / JAL-1 / JCM 10045 / NBRC 100440) (Methanococcus jannaschii), this protein is Putative protein adenylyltransferase MJ1305.